Consider the following 349-residue polypeptide: ALA-interacting subunit 3 (349 aa).

A compositionally biased stretch (low complexity) spans 1–21 (MSSNTASSSAGAAGSGDSSAA). The interval 1–30 (MSSNTASSSAGAAGSGDSSAARKNSKRPKY) is disordered. At S2 the chain carries N-acetylserine. Residues 50–70 (VISTFLIVSVIFIPLGVISLF) traverse the membrane as a helical segment. Residues N181, N190, and N223 are each glycosylated (N-linked (GlcNAc...) asparagine). The helical transmembrane segment at 305–325 (LGIAYLTVGGICFILALAFTI) threads the bilayer.

It belongs to the CDC50/LEM3 family. Interacts with ALA2 and ALA3 in a heterologous system. As to expression, expressed in roots, leaves, stems, flowers and siliques.

Its subcellular location is the golgi apparatus membrane. The protein resides in the prevacuolar compartment membrane. It localises to the endoplasmic reticulum membrane. Its function is as follows. Required for the lipid transport activity of the ALA/ALIS P4-ATPase complex. This chain is ALA-interacting subunit 3 (ALIS3), found in Arabidopsis thaliana (Mouse-ear cress).